The following is a 251-amino-acid chain: Ribonuclease PH (251 aa).

Phosphate-binding positions include Arg87 and 125-127 (GTR).

This sequence belongs to the RNase PH family. As to quaternary structure, homohexameric ring arranged as a trimer of dimers.

The catalysed reaction is tRNA(n+1) + phosphate = tRNA(n) + a ribonucleoside 5'-diphosphate. Phosphorolytic 3'-5' exoribonuclease that plays an important role in tRNA 3'-end maturation. Removes nucleotide residues following the 3'-CCA terminus of tRNAs; can also add nucleotides to the ends of RNA molecules by using nucleoside diphosphates as substrates, but this may not be physiologically important. Probably plays a role in initiation of 16S rRNA degradation (leading to ribosome degradation) during starvation. The polypeptide is Ribonuclease PH (Saccharopolyspora erythraea (strain ATCC 11635 / DSM 40517 / JCM 4748 / NBRC 13426 / NCIMB 8594 / NRRL 2338)).